The sequence spans 1363 residues: Neurexin-1 (1363 aa).

The Extracellular segment spans residues 1–1287 (SKRRDMTVFS…EVIRESSSTT (1287 aa)). Asparagine 49 is a glycosylation site (N-linked (GlcNAc...) asparagine). Residues 67 to 105 (QSRLCAREDVCLNGGVCSVLNDQAVCDCSQTGFRGKDCS) form the EGF-like 1 domain. 3 disulfide bridges follow: cysteine 71–cysteine 83, cysteine 77–cysteine 92, and cysteine 94–cysteine 104. Laminin G-like domains follow at residues 132–329 (IATF…AFKC) and 336–528 (DPIT…KPSC). Ca(2+) contacts are provided by aspartate 178, leucine 195, and methionine 263. 5 disulfides stabilise this stretch: cysteine 293–cysteine 329, cysteine 499–cysteine 528, cysteine 536–cysteine 547, cysteine 541–cysteine 556, and cysteine 558–cysteine 568. The region spanning 532–569 (TAKPCLSNPCKNNGVCRDGWNRYVCDCSGTGYLGRSCE) is the EGF-like 2 domain. 2 Laminin G-like domains span residues 574-747 (ILSY…IDYC) and 761-936 (DPVT…ERGC). An N-linked (GlcNAc...) asparagine glycan is attached at asparagine 646. Disulfide bonds link cysteine 908–cysteine 936, cysteine 943–cysteine 954, cysteine 948–cysteine 963, and cysteine 965–cysteine 975. In terms of domain architecture, EGF-like 3 spans 939–976 (PSTTCQEDSCANQGVCLQQWDGFSCDCSMTSFSGPLCN). The Laminin G-like 5 domain occupies 982–1180 (YIFSKGGGQI…DANIVIEGNV (199 aa)). Asparagine 1079 carries N-linked (GlcNAc...) asparagine glycosylation. The interval 1244-1280 (CPSDDEDIDPCEPSSGGLANPTRAGGGREYPGSSEVI) is disordered. The helical transmembrane segment at 1288–1308 (GMVVGIVAAAALCILILLYAM) threads the bilayer. Residues 1309-1363 (YKYRNRDEGSYHVDESRNYISNSAQSNGAVIKEKQPNSAKSSNKNKKNKDKEYYV) are Cytoplasmic-facing. Residues 1330–1363 (NSAQSNGAVIKEKQPNSAKSSNKNKKNKDKEYYV) are disordered.

This sequence belongs to the neurexin family. The cytoplasmic C-terminal region binds to CASK. The laminin G-like domain 1 binds to NXPH1. Specific isoforms bind to alpha-dystroglycan and to alpha-latrotoxin. Post-translationally, N- and O-glycosylated.

The protein resides in the membrane. Functionally, neuronal cell surface protein that may be involved in cell recognition and cell adhesion. May mediate intracellular signaling. The sequence is that of Neurexin-1 (NRXN1) from Gallus gallus (Chicken).